We begin with the raw amino-acid sequence, 312 residues long: Ribosomal protein L11 methyltransferase (312 aa).

Residues Thr-162, Gly-183, Asp-205, and Asn-248 each contribute to the S-adenosyl-L-methionine site.

Belongs to the methyltransferase superfamily. PrmA family.

It localises to the cytoplasm. The catalysed reaction is L-lysyl-[protein] + 3 S-adenosyl-L-methionine = N(6),N(6),N(6)-trimethyl-L-lysyl-[protein] + 3 S-adenosyl-L-homocysteine + 3 H(+). Its function is as follows. Methylates ribosomal protein L11. This Bacillus cereus (strain G9842) protein is Ribosomal protein L11 methyltransferase.